Reading from the N-terminus, the 616-residue chain is Dihydroxy-acid dehydratase (616 aa).

D81 provides a ligand contact to Mg(2+). C122 is a binding site for [2Fe-2S] cluster. D123 and K124 together coordinate Mg(2+). Residue K124 is modified to N6-carboxylysine. Position 195 (C195) interacts with [2Fe-2S] cluster. E491 contributes to the Mg(2+) binding site. S517 acts as the Proton acceptor in catalysis.

Belongs to the IlvD/Edd family. As to quaternary structure, homodimer. It depends on [2Fe-2S] cluster as a cofactor. Mg(2+) is required as a cofactor.

The enzyme catalyses (2R)-2,3-dihydroxy-3-methylbutanoate = 3-methyl-2-oxobutanoate + H2O. It carries out the reaction (2R,3R)-2,3-dihydroxy-3-methylpentanoate = (S)-3-methyl-2-oxopentanoate + H2O. It participates in amino-acid biosynthesis; L-isoleucine biosynthesis; L-isoleucine from 2-oxobutanoate: step 3/4. Its pathway is amino-acid biosynthesis; L-valine biosynthesis; L-valine from pyruvate: step 3/4. Its function is as follows. Functions in the biosynthesis of branched-chain amino acids. Catalyzes the dehydration of (2R,3R)-2,3-dihydroxy-3-methylpentanoate (2,3-dihydroxy-3-methylvalerate) into 2-oxo-3-methylpentanoate (2-oxo-3-methylvalerate) and of (2R)-2,3-dihydroxy-3-methylbutanoate (2,3-dihydroxyisovalerate) into 2-oxo-3-methylbutanoate (2-oxoisovalerate), the penultimate precursor to L-isoleucine and L-valine, respectively. This is Dihydroxy-acid dehydratase from Tolumonas auensis (strain DSM 9187 / NBRC 110442 / TA 4).